The sequence spans 110 residues: Large ribosomal subunit protein uL22 (110 aa).

This sequence belongs to the universal ribosomal protein uL22 family. Part of the 50S ribosomal subunit.

Functionally, this protein binds specifically to 23S rRNA; its binding is stimulated by other ribosomal proteins, e.g. L4, L17, and L20. It is important during the early stages of 50S assembly. It makes multiple contacts with different domains of the 23S rRNA in the assembled 50S subunit and ribosome. In terms of biological role, the globular domain of the protein is located near the polypeptide exit tunnel on the outside of the subunit, while an extended beta-hairpin is found that lines the wall of the exit tunnel in the center of the 70S ribosome. This Stutzerimonas stutzeri (strain A1501) (Pseudomonas stutzeri) protein is Large ribosomal subunit protein uL22.